The following is a 389-amino-acid chain: UDP-D-apiose/UDP-D-xylose synthase 2 (389 aa).

Phe28, Ile29, Asp49, Asn76, Ile77, and Leu96 together coordinate NAD(+). UDP-alpha-D-glucuronate-binding residues include Tyr105, Thr139, Glu141, Arg182, and Tyr185. The NAD(+) site is built by Tyr185 and Lys189. Tyr185 (proton acceptor) is an active-site residue. Asn214 contributes to the UDP-alpha-D-glucuronate binding site. NAD(+)-binding residues include Trp215 and Arg235. Residues Lys251, Val253, Arg260, Tyr331, Tyr335, Asp337, and Arg341 each coordinate UDP-alpha-D-glucuronate.

Belongs to the NAD(P)-dependent epimerase/dehydratase family. As to quaternary structure, homodimer and heterodimer with AXS1. The cofactor is NAD(+). Widely expressed with stronger expression in dark-grown seedlings, leaves and stems, and lower levels in flowers, siliques, pistils, pollen and roots.

The protein resides in the cytoplasm. It carries out the reaction UDP-alpha-D-glucuronate + H(+) = UDP-alpha-D-xylose + CO2. The enzyme catalyses UDP-alpha-D-glucuronate + H(+) = UDP-alpha-D-apiose + CO2. Together with AXS1, catalyzes the conversion of UDP-D-glucuronate into a mixture of UDP-D-apiose (UDP-Api) as the main product and UDP-D-xylose to a lesser extent, via a cycle of oxidation and reduction. D-Apiose (3-C-hydroxymethyl-d-erythrose) is the only plant cell wall monosaccharide with a branched carbon skeleton and is found in rhamnogalacturonan II (RG-II), apiogalacturonan, and several apioglycosides. The sequence is that of UDP-D-apiose/UDP-D-xylose synthase 2 from Arabidopsis thaliana (Mouse-ear cress).